The following is a 434-amino-acid chain: V-type ATP synthase beta chain (434 aa).

It belongs to the ATPase alpha/beta chains family.

In terms of biological role, produces ATP from ADP in the presence of a proton gradient across the membrane. The V-type beta chain is a regulatory subunit. The polypeptide is V-type ATP synthase beta chain (Borreliella afzelii (strain PKo) (Borrelia afzelii)).